A 474-amino-acid chain; its full sequence is Probable periplasmic serine endoprotease DegP-like (474 aa).

Residues 1–25 (MRNLKSVTPLLMAALLWGQSLLAQA) form the signal peptide. Active-site charge relay system residues include H113, D143, and S216. Substrate-binding positions include 214–216 (GNS) and 271–275 (LGVVI). PDZ domains follow at residues 260–351 (LKAD…VRDG) and 357–463 (KVTI…LRQG).

The protein belongs to the peptidase S1C family.

Its subcellular location is the periplasm. The enzyme catalyses Acts on substrates that are at least partially unfolded. The cleavage site P1 residue is normally between a pair of hydrophobic residues, such as Val-|-Val.. Might be efficient in the degradation of transiently denatured and unfolded proteins which accumulate in the periplasm following stress conditions. This Ectopseudomonas mendocina (strain ymp) (Pseudomonas mendocina) protein is Probable periplasmic serine endoprotease DegP-like.